The following is a 153-amino-acid chain: uncharacterized protein (153 aa).

2 disordered regions span residues 30–66 (GPTV…RKGD) and 79–153 (IKEN…DYDD). The segment covering 45 to 56 (EDSDGSDKEDEQ) has biased composition (acidic residues). 2 stretches are compositionally biased toward polar residues: residues 106–116 (GDTTSGVNACS) and 130–144 (GTKS…SSLL).

This is an uncharacterized protein from Xenopus laevis (African clawed frog).